Consider the following 370-residue polypeptide: Nociceptin receptor (370 aa).

Over 1–48 the chain is Extracellular; the sequence is MESLFPAPFWEVLYGSPLQGNLSLLSPNHSLLPPHLLLNASHGAFLPL. Residues asparagine 21, asparagine 28, and asparagine 39 are each glycosylated (N-linked (GlcNAc...) asparagine). The helical transmembrane segment at 49–74 threads the bilayer; the sequence is GLKVTIVGLYLAVCVGGLLGNCLVMY. At 75–87 the chain is on the cytoplasmic side; it reads VILRHTKMKTATN. Residues 88–109 traverse the membrane as a helical segment; it reads IYIFNLALADTAVLLTLPFQGT. Residues 110 to 124 are Extracellular-facing; the sequence is DVLLGFWPFGNALCK. A disulfide bridge connects residues cysteine 123 and cysteine 200. Residues 125 to 146 traverse the membrane as a helical segment; sequence AVIAIDYYNMFTSAFTLTAMSV. The Cytoplasmic segment spans residues 147–165; the sequence is DRYVAICHPIRALDVRTSS. Residues 166-188 traverse the membrane as a helical segment; that stretch reads KAQAVNVAIWALASIVGVPVAIM. At 189–211 the chain is on the extracellular side; that stretch reads GSAQVEDEEIECLVEIPAPQDYW. A helical transmembrane segment spans residues 212–236; that stretch reads GPVFAVCIFLFSFVIPVLIISVCYS. Residues 237–264 lie on the Cytoplasmic side of the membrane; it reads LMVRRLRGVRLLSGSREKDRNLRRITRL. Residues 265–285 form a helical membrane-spanning segment; that stretch reads VLVVVAVFVGCWTPVQVFVLV. The Extracellular segment spans residues 286 to 300; that stretch reads QGLGVQPGSETAVAV. The helical transmembrane segment at 301–322 threads the bilayer; that stretch reads LRFCTALGYVNSCLNPILYAFL. Topologically, residues 323 to 370 are cytoplasmic; the sequence is DENFKACFRKFCCAPTRRREMQVSDRVRSIAKDVALACKTSETVPRPA. Residue cysteine 334 is the site of S-palmitoyl cysteine attachment.

The protein belongs to the G-protein coupled receptor 1 family. In terms of processing, phosphorylation at Ser-363 requires GRK3. Detected in brain cortex, stomach, ileum, jejunum and colon.

It is found in the cell membrane. Its subcellular location is the cytoplasmic vesicle. Its function is as follows. G-protein coupled opioid receptor that functions as a receptor for the endogenous neuropeptide nociceptin. Ligand binding causes a conformation change that triggers signaling via guanine nucleotide-binding proteins (G proteins) and modulates the activity of down-stream effectors. Signaling via G proteins mediates inhibition of adenylate cyclase activity and calcium channel activity. Arrestins modulate signaling via G proteins and mediate the activation of alternative signaling pathways that lead to the activation of MAP kinases. Plays a role in modulating nociception and the perception of pain. Plays a role in the regulation of locomotor activity by the neuropeptide nociceptin. This chain is Nociceptin receptor (OPRL1), found in Sus scrofa (Pig).